Reading from the N-terminus, the 238-residue chain is Uridylate kinase (238 aa).

12–15 provides a ligand contact to ATP; that stretch reads KLSG. Gly54 is a UMP binding site. The ATP site is built by Gly55 and Arg59. UMP contacts are provided by residues Asp74 and 135 to 142; that span reads TGNPFFTT. ATP contacts are provided by Thr162, Tyr168, and Asp171.

Belongs to the UMP kinase family. As to quaternary structure, homohexamer.

Its subcellular location is the cytoplasm. It carries out the reaction UMP + ATP = UDP + ADP. It participates in pyrimidine metabolism; CTP biosynthesis via de novo pathway; UDP from UMP (UMPK route): step 1/1. With respect to regulation, inhibited by UTP. Functionally, catalyzes the reversible phosphorylation of UMP to UDP. In Azoarcus sp. (strain BH72), this protein is Uridylate kinase.